The chain runs to 340 residues: Phenylalanine--tRNA ligase alpha subunit (340 aa).

E255 contributes to the Mg(2+) binding site.

This sequence belongs to the class-II aminoacyl-tRNA synthetase family. Phe-tRNA synthetase alpha subunit type 1 subfamily. Tetramer of two alpha and two beta subunits. Requires Mg(2+) as cofactor.

It localises to the cytoplasm. The enzyme catalyses tRNA(Phe) + L-phenylalanine + ATP = L-phenylalanyl-tRNA(Phe) + AMP + diphosphate + H(+). This Syntrophomonas wolfei subsp. wolfei (strain DSM 2245B / Goettingen) protein is Phenylalanine--tRNA ligase alpha subunit.